The primary structure comprises 329 residues: Segregation and condensation protein B (329 aa).

Disordered stretches follow at residues 1-39, 252-274, and 286-329; these read MTTGSNGPQDETPEPGTPGGPGPFSEEEIAAVTGPGPAD, IVEKEDKPAPPAAGTVEALSDPA, and SEAA…PKPE.

This sequence belongs to the ScpB family. In terms of assembly, homodimer. Homodimerization may be required to stabilize the binding of ScpA to the Smc head domains. Component of the Structural Maintenance of Chromosome (SMC) condensin-like complex composed of ScpA, ScpB and the Smc homodimer. ScpA and ScpB bind to the head domain of Smc, the presence of the three proteins is required for the association of the complex with DNA.

It is found in the cytoplasm. Functionally, a conditionally essential component of the chromosome segregation machinery. Required for chromosome condensation and partitioning. Important for positioning and anchoring of ParB-parS complexes (ori of replication) in the subpolar region, and of the ter replication site, as well as for segration of the ParB-parS complex and thus chromosome segregation. Probably acts via the formation of a condensin-like complex containing Smc, ScpA and ScpB that pulls DNA away from mid-cell into both cell halves. The protein is Segregation and condensation protein B of Myxococcus xanthus (strain DK1622).